The following is a 423-amino-acid chain: MKIERLKGFRDHYPDDMEIRYDFIKKMMDTAISFGYKMIDFPSLESMDLYRLKSGTELVEQTFSFTDKGGREVTMIPEATPSTMRMLTSRKDIKMPARWFSIPKVWRYEEPQEGRYREHIQFNADMFGADSPEADAEIIGLAATILDNLGLSGQYEINVNDRYLMELILRDLGSNNPVDLFPVIDRFKKMDLTDFKKRLLKDLDDDASEKLISLLMNRIDINDVERLLNGYANDVMERVKRLKDTFALTSKYTKSKLNIDLSVVRGLSYYTGIVFEAFDISGELRAILGGGRYDNLSNLFINESIPAVGFAIGDAVIELLLKRNNLWNYKDKRKRYYVVNISSSPEAHIEILNKIRGSGNIAISEVNKRRMQTIIKYAESIKCDFLIIIGDRELSSKKMTIKNLRTQEQAEMNIDDFINNINS.

This sequence belongs to the class-II aminoacyl-tRNA synthetase family.

The protein resides in the cytoplasm. The enzyme catalyses tRNA(His) + L-histidine + ATP = L-histidyl-tRNA(His) + AMP + diphosphate + H(+). The sequence is that of Histidine--tRNA ligase from Picrophilus torridus (strain ATCC 700027 / DSM 9790 / JCM 10055 / NBRC 100828 / KAW 2/3).